The following is a 106-amino-acid chain: Large ribosomal subunit protein eL42 (106 aa).

Positions 34-53 (YAQGRRRYDRKRSGYGGQTK) are disordered. N6-methyllysine is present on lysine 53.

This sequence belongs to the eukaryotic ribosomal protein eL42 family.

The protein resides in the cytoplasm. In Pongo abelii (Sumatran orangutan), this protein is Large ribosomal subunit protein eL42 (RPL36AL).